The sequence spans 527 residues: SusD-like protein P25 (527 aa).

The signal sequence occupies residues 1 to 15 (MKIQNIIVYVFLIFS). Cysteine 16 carries the N-palmitoyl cysteine lipid modification. Cysteine 16 carries the S-diacylglycerol cysteine lipid modification.

The protein belongs to the SusD family.

The protein localises to the cell outer membrane. In terms of biological role, polysaccharide-binding protein probably involved in ulvan degradation. Ulvan is the main polysaccharide component of the Ulvales (green seaweed) cell wall. It is composed of disaccharide building blocks comprising 3-sulfated rhamnose (Rha3S) linked to D-glucuronic acid (GlcA), L-iduronic acid (IduA), or D-xylose (Xyl). The SusD-like protein may mediate ulvan oligomer-binding before transport in the periplasm for further degradation. The polypeptide is SusD-like protein P25 (Formosa agariphila (strain DSM 15362 / KCTC 12365 / LMG 23005 / KMM 3901 / M-2Alg 35-1)).